Consider the following 1458-residue polypeptide: Secretory phospholipase A2 receptor (1458 aa).

A signal peptide spans 1-23 (MLLSLLLLLLLGAPRRCTEGAAA). Over 24–1393 (ALSPERVLKW…EHPGKGPSHS (1370 aa)) the chain is Extracellular. 17 cysteine pairs are disulfide-bonded: cysteine 49–cysteine 62, cysteine 87–cysteine 104, cysteine 176–cysteine 202, cysteine 190–cysteine 217, cysteine 258–cysteine 352, cysteine 328–cysteine 344, cysteine 404–cysteine 499, cysteine 476–cysteine 491, cysteine 615–cysteine 632, cysteine 697–cysteine 794, cysteine 772–cysteine 786, cysteine 838–cysteine 935, cysteine 912–cysteine 927, cysteine 1065–cysteine 1085, cysteine 1207–cysteine 1221, cysteine 1278–cysteine 1373, and cysteine 1350–cysteine 1365. In terms of domain architecture, Ricin B-type lectin spans 49 to 113 (CIQAGKSVLT…CDSTHVSLRW (65 aa)). An N-linked (GlcNAc...) asparagine glycan is attached at asparagine 91. A Fibronectin type-II domain is found at 171–219 (AHGTPCMFPFQYNHQWHHECTREGRQDDSLWCATTSRYERDEKWGFCPD). 8 C-type lectin domains span residues 227-356 (CDAV…KKYL), 374-502 (TDCE…CKKP), 511-645 (SGCQ…KQPV), 660-798 (HPCY…KIPR), 815-939 (LFHQ…KRKT), 954-1098 (GTCP…EKIQ), 1117-1231 (LEYG…AICH), and 1243-1376 (ELCS…CKMK). N-linked (GlcNAc...) asparagine glycosylation is found at asparagine 408, asparagine 431, and asparagine 452. A helical membrane pass occupies residues 1394-1416 (IVPLAVALTLVVILAIITLSFYI). Over 1417–1458 (YKQNKGFFRRLAGVGNSYYPTTNFSTIHLEENILISDLEKND) the chain is Cytoplasmic. The Endocytosis signal motif lies at 1432–1438 (NSYYPTT).

As to quaternary structure, interacts with sPLA2-IB/PLA2G1B; this interaction mediates intracellular signaling as well as clearance of extracellular sPLA2-IB/PLA2G1B via endocytotic pathway. Interacts with sPLA2-X/PLA2G10; this interaction mediates sPLA2-X/PLA2G10 clearance and inactivation. The secretory phospholipase A2 receptor form may be produced by the action of metalloproteinases. It contains all extracellular domains and only lacks transmembrane and cytosolic regions. It is however unclear whether this form is produced by proteolytic cleavage as suggested by some experiments, or by alternative splicing. As to expression, lung, skeletal muscle, brain, kidney and heart.

The protein resides in the cell membrane. The protein localises to the secreted. In terms of biological role, receptor for secretory phospholipase A2 (sPLA2). Also able to bind to snake PA2-like toxins. Although its precise function remains unclear, binding of sPLA2 to its receptor participates in both positive and negative regulation of sPLA2 functions as well as clearance of sPLA2. Binding of sPLA2-IB/PLA2G1B induces various effects depending on the cell type, such as activation of the mitogen-activated protein kinase (MAPK) cascade to induce cell proliferation, the production of lipid mediators, selective release of arachidonic acid in bone marrow-derived mast cells. In neutrophils, binding of sPLA2-IB/PLA2G1B can activate p38 MAPK to stimulate elastase release and cell adhesion. May be involved in responses in pro-inflammatory cytokine productions during endotoxic shock. Also has endocytic properties and rapidly internalizes sPLA2 ligands, which is particularly important for the clearance of extracellular sPLA2s to protect their potent enzymatic activities. The soluble secretory phospholipase A2 receptor form is circulating and acts as a negative regulator of sPLA2 functions by blocking the biological functions of sPLA2-IB/PLA2G1B and sPLA2-X/PLA2G10. This is Secretory phospholipase A2 receptor (PLA2R1) from Oryctolagus cuniculus (Rabbit).